The primary structure comprises 399 residues: UDP-galactopyranose mutase (399 aa).

Residues phenylalanine 18, glutamate 38, asparagine 46, and leucine 66 each coordinate FAD. Residues phenylalanine 157, threonine 162, tryptophan 166, and tyrosine 191 each coordinate UDP-alpha-D-galactose. Aspartate 224–tryptophan 225 lines the FAD pocket. Positions 282, 292, and 328 each coordinate UDP-alpha-D-galactose. FAD is bound at residue arginine 360. A UDP-alpha-D-galactose-binding site is contributed by tyrosine 366. Leucine 367–methionine 369 lines the FAD pocket.

The protein belongs to the UDP-galactopyranose/dTDP-fucopyranose mutase family. As to quaternary structure, homotetramer. Requires FAD as cofactor.

It carries out the reaction UDP-alpha-D-galactose = UDP-alpha-D-galactofuranose. The protein operates within cell wall biogenesis; cell wall polysaccharide biosynthesis. In terms of biological role, catalyzes the interconversion through a 2-keto intermediate of uridine diphosphogalactopyranose (UDP-GalP) into uridine diphosphogalactofuranose (UDP-GalF) which is a key building block for cell wall construction in Mycobacterium tuberculosis. In Mycobacterium tuberculosis (strain CDC 1551 / Oshkosh), this protein is UDP-galactopyranose mutase (glf).